The primary structure comprises 268 residues: Type III pantothenate kinase 1 (268 aa).

Asp6–Thr13 provides a ligand contact to ATP. Residues Tyr100 and Gly107–Arg110 contribute to the substrate site. Asp109 functions as the Proton acceptor in the catalytic mechanism. A K(+)-binding site is contributed by Asp133. Thr136 contributes to the ATP binding site.

Belongs to the type III pantothenate kinase family. In terms of assembly, homodimer. The cofactor is NH4(+). K(+) serves as cofactor.

It localises to the cytoplasm. It carries out the reaction (R)-pantothenate + ATP = (R)-4'-phosphopantothenate + ADP + H(+). It functions in the pathway cofactor biosynthesis; coenzyme A biosynthesis; CoA from (R)-pantothenate: step 1/5. Its function is as follows. Catalyzes the phosphorylation of pantothenate (Pan), the first step in CoA biosynthesis. This is Type III pantothenate kinase 1 from Symbiobacterium thermophilum (strain DSM 24528 / JCM 14929 / IAM 14863 / T).